We begin with the raw amino-acid sequence, 762 residues long: Protein PHTF1 (762 aa).

One can recognise a PHTF domain in the interval 6 to 150 (RDAISWYQKK…VHCQIVSTQI (145 aa)). 3 helical membrane-spanning segments follow: residues 77 to 97 (GLVR…VTSL), 99 to 119 (IFVW…LYLM), and 121 to 141 (PIVS…MGTV). The disordered stretch occupies residues 152–184 (RPSGNNGNRRRRKLRKTVNGDGTRDNGNNSPDK). N-linked (GlcNAc...) asparagine glycosylation is found at Asn-179 and Asn-224. Ser-272, Ser-276, Ser-277, Ser-334, and Ser-336 each carry phosphoserine. The interval 345 to 415 (AAFSQGSRSG…NTLHSGTKRD (71 aa)) is disordered. The segment covering 348–364 (SQGSRSGMSGGSRSLNL) has biased composition (low complexity). N-linked (GlcNAc...) asparagine glycosylation is present at Asn-363. Residues 365–376 (SRRDSESTRHDS) show a composition bias toward basic and acidic residues. Residue Asn-431 is glycosylated (N-linked (GlcNAc...) asparagine). 4 helical membrane passes run 473–493 (GVGY…FPFL), 515–535 (TLFC…INFF), 611–631 (VVVS…CAQV), and 645–665 (WEFL…ASLG). N-linked (GlcNAc...) asparagine glycosylation is found at Asn-674 and Asn-733. The chain crosses the membrane as a helical span at residues 737 to 757 (VVILSAVSGVISDLLGFNIRL).

Interacts with FEM1B. In terms of tissue distribution, highly expressed in testis.

The protein localises to the endoplasmic reticulum membrane. The protein resides in the golgi apparatus. It localises to the cis-Golgi network membrane. The chain is Protein PHTF1 from Rattus norvegicus (Rat).